A 972-amino-acid polypeptide reads, in one-letter code: Translation initiation factor IF-2 (972 aa).

The segment covering 49 to 63 (HLRKSHGATDGDKRK) has biased composition (basic and acidic residues). Disordered stretches follow at residues 49-86 (HLRK…ARTI) and 100-383 (DDVA…TFQA). The segment covering 105–114 (GAEQGQAQVA) has biased composition (low complexity). Over residues 121–177 (ELKRREEEARREAELLEKQAQELRERQERLEREEAERRAREEAAEAERRRAEEEAAA) the composition is skewed to basic and acidic residues. The segment covering 178–209 (KRAAAAAVEAQQAAAQQAAEAQQETAGAQSAQ) has biased composition (low complexity). Basic and acidic residues predominate over residues 210–261 (DEARAAAERAAQREAAKKAEDAAREAADKTRAEQEEIRKRREAAEAEARAIR). Positions 277–286 (PPKPVEPPKP) are enriched in pro residues. Residues 298-327 (KPAGAGAARPAVKKPAGAAPATTQAPAGAG) show a composition bias toward low complexity. Positions 356 to 369 (SSGGVDRGWRGGPK) are enriched in gly residues. A tr-type G domain is found at 472-641 (PRPPVVTVMG…LLQAEVLELK (170 aa)). A G1 region spans residues 481 to 488 (GHVDHGKT). 481-488 (GHVDHGKT) lines the GTP pocket. Positions 506 to 510 (GITQH) are G2. The tract at residues 527-530 (DTPG) is G3. Residues 527–531 (DTPGH) and 581–584 (NKID) each bind GTP. The tract at residues 581 to 584 (NKID) is G4. The segment at 617–619 (SAK) is G5.

The protein belongs to the TRAFAC class translation factor GTPase superfamily. Classic translation factor GTPase family. IF-2 subfamily.

The protein localises to the cytoplasm. Functionally, one of the essential components for the initiation of protein synthesis. Protects formylmethionyl-tRNA from spontaneous hydrolysis and promotes its binding to the 30S ribosomal subunits. Also involved in the hydrolysis of GTP during the formation of the 70S ribosomal complex. This chain is Translation initiation factor IF-2, found in Burkholderia ambifaria (strain MC40-6).